We begin with the raw amino-acid sequence, 430 residues long: Enolase (430 aa).

Q165 contributes to the (2R)-2-phosphoglycerate binding site. Residue E207 is the Proton donor of the active site. Residues D244, E287, and D314 each coordinate Mg(2+). The (2R)-2-phosphoglycerate site is built by K339, R368, S369, and K390. The Proton acceptor role is filled by K339.

Belongs to the enolase family. As to quaternary structure, component of the RNA degradosome, a multiprotein complex involved in RNA processing and mRNA degradation. Requires Mg(2+) as cofactor.

Its subcellular location is the cytoplasm. It is found in the secreted. The protein localises to the cell surface. It catalyses the reaction (2R)-2-phosphoglycerate = phosphoenolpyruvate + H2O. Its pathway is carbohydrate degradation; glycolysis; pyruvate from D-glyceraldehyde 3-phosphate: step 4/5. In terms of biological role, catalyzes the reversible conversion of 2-phosphoglycerate (2-PG) into phosphoenolpyruvate (PEP). It is essential for the degradation of carbohydrates via glycolysis. The polypeptide is Enolase (Xanthomonas axonopodis pv. citri (strain 306)).